The chain runs to 355 residues: MKIDPNKEKALAAVLGQIEKQFGKGSIMKLGEDRSMDVETISTGSLSLDVALGAGGLPMGRIVEIYGPESSGKTTLTLEVIAAAQREGKVCAFIDAEHALDPVYARKLGVDIDNLLCSQPDTGEQALEICDALTRSGAVDVIIVDSVAALVPKAEIEGEIGDSHVGLAARMMSQAMRKLAGNLKQSNTLLIFINQIRMKIGVMFGNPETTTGGNALKFYASVRLDIRRTGAIKEGDEVVGNETRVKVVKNKIAAPFRQADFQILYGQGINRTGELVDLGVLHKLIEKSGAWYSYKGDKIGQGRANATKFLAENTEIAAEIEKTLREMLLSHSSSSGSADEVEGDENIDFETGEVF.

67–74 contacts ATP; that stretch reads GPESSGKT.

Belongs to the RecA family.

The protein resides in the cytoplasm. Can catalyze the hydrolysis of ATP in the presence of single-stranded DNA, the ATP-dependent uptake of single-stranded DNA by duplex DNA, and the ATP-dependent hybridization of homologous single-stranded DNAs. It interacts with LexA causing its activation and leading to its autocatalytic cleavage. The polypeptide is Protein RecA (Shewanella amazonensis (strain ATCC BAA-1098 / SB2B)).